The sequence spans 679 residues: tRNA uridine 5-carboxymethylaminomethyl modification enzyme MnmG (679 aa).

13-18 (GGGHAG) is a binding site for FAD. 280 to 294 (GPRYCPSVEDKINRF) contacts NAD(+).

It belongs to the MnmG family. Homodimer. Heterotetramer of two MnmE and two MnmG subunits. Requires FAD as cofactor.

Its subcellular location is the cytoplasm. Its function is as follows. NAD-binding protein involved in the addition of a carboxymethylaminomethyl (cmnm) group at the wobble position (U34) of certain tRNAs, forming tRNA-cmnm(5)s(2)U34. The polypeptide is tRNA uridine 5-carboxymethylaminomethyl modification enzyme MnmG (Albidiferax ferrireducens (strain ATCC BAA-621 / DSM 15236 / T118) (Rhodoferax ferrireducens)).